Consider the following 496-residue polypeptide: MTGGALLVAGTTSDAGKSMLVGGLCRLLVRKGLSVAPFKAQNMSNNSAVTVEGGEIGRAQAMQARAAGLAPSVRFNPILLKPGGDRTSQLVVRGQVTGSVAAADYINHRDHLAAVVADELSSLREDFDAVICEGAGSPAEINLRATDLANMGLARAAALPVIVVGDIDRGGLLAHLHGTVAVLEPADQALVSGFVVNKFRGDPSLLAPGLRQLAELTGRPTYGVIPFHDEIWLDTEDSVSVRPGGLVGAPEPPRGEQTLTVAAIRLPRISNSTDIEALACEPGVVVRWVTDAADLTGADLVVIPGSKATVTDLRWLRERGLAAGIAAHAAAGRAVLGVCGGFQMLCSRIDDPVESREGRVDGLGLLDADIEFAAQKTLRHWETPLHGYEIHHGQVARSAETDWLGIGLRRGAVYGTHWHGLLDNDALRRDWLTEVAAAAGRDGFVVADDVDVSARRDAQLDLMADLIENHLDVGAILDLLEHGAPHRPTMSTALHV.

Positions threonine 258–leucine 427 constitute a GATase cobBQ-type domain. Residue cysteine 339 is the Nucleophile of the active site. The active site involves histidine 419.

The protein belongs to the CobB/CobQ family. CobQ subfamily.

Its pathway is cofactor biosynthesis; adenosylcobalamin biosynthesis. Catalyzes amidations at positions B, D, E, and G on adenosylcobyrinic A,C-diamide. NH(2) groups are provided by glutamine, and one molecule of ATP is hydrogenolyzed for each amidation. In Mycolicibacterium smegmatis (strain ATCC 700084 / mc(2)155) (Mycobacterium smegmatis), this protein is Cobyric acid synthase.